We begin with the raw amino-acid sequence, 347 residues long: NADH-ubiquinone oxidoreductase chain 2 (347 aa).

Helical transmembrane passes span 3 to 23, 25 to 45, 66 to 86, 93 to 115, 149 to 169, 178 to 198, 201 to 221, 237 to 257, 274 to 294, and 325 to 345; these read PPIL…VMLS, HWLL…PILM, ASML…QWVI, IASI…HFWV, INTN…GWGG, IMAY…TYNP, MILN…LFML, FPLI…LPPL, NMII…YFYL, and LLPP…MLSV.

The protein belongs to the complex I subunit 2 family. As to quaternary structure, core subunit of respiratory chain NADH dehydrogenase (Complex I) which is composed of 45 different subunits. Interacts with TMEM242.

The protein resides in the mitochondrion inner membrane. The catalysed reaction is a ubiquinone + NADH + 5 H(+)(in) = a ubiquinol + NAD(+) + 4 H(+)(out). In terms of biological role, core subunit of the mitochondrial membrane respiratory chain NADH dehydrogenase (Complex I) which catalyzes electron transfer from NADH through the respiratory chain, using ubiquinone as an electron acceptor. Essential for the catalytic activity and assembly of complex I. In Canis lupus (Gray wolf), this protein is NADH-ubiquinone oxidoreductase chain 2.